Consider the following 328-residue polypeptide: Phenylalanine--tRNA ligase alpha subunit (328 aa).

Belongs to the class-II aminoacyl-tRNA synthetase family. Phe-tRNA synthetase alpha subunit type 1 subfamily. As to quaternary structure, tetramer of two alpha and two beta subunits. Mg(2+) is required as a cofactor.

Its subcellular location is the cytoplasm. It catalyses the reaction tRNA(Phe) + L-phenylalanine + ATP = L-phenylalanyl-tRNA(Phe) + AMP + diphosphate + H(+). This is Phenylalanine--tRNA ligase alpha subunit from Buchnera aphidicola subsp. Baizongia pistaciae (strain Bp).